Reading from the N-terminus, the 274-residue chain is Energy-coupling factor transporter ATP-binding protein EcfA (274 aa).

In terms of domain architecture, ABC transporter spans 2–235 (IRLENVSYNY…LSLRYLGLTP (234 aa)). 35 to 42 (GKNGSGKS) contributes to the ATP binding site.

This sequence belongs to the ABC transporter superfamily. Energy-coupling factor EcfA family. Forms a stable energy-coupling factor (ECF) transporter complex composed of 2 membrane-embedded substrate-binding proteins (S component), 2 ATP-binding proteins (A component) and 2 transmembrane proteins (T component).

The protein localises to the cell membrane. In terms of biological role, ATP-binding (A) component of a common energy-coupling factor (ECF) ABC-transporter complex. Unlike classic ABC transporters this ECF transporter provides the energy necessary to transport a number of different substrates. The sequence is that of Energy-coupling factor transporter ATP-binding protein EcfA from Methanosarcina acetivorans (strain ATCC 35395 / DSM 2834 / JCM 12185 / C2A).